Here is a 192-residue protein sequence, read N- to C-terminus: Putative manganese efflux pump MntP (192 aa).

Helical transmembrane passes span 3 to 23 (FSAILLLALGLAMDATAVAAA), 36 to 56 (VLLVAGFFGGAQALMPVIGWL), 65 to 85 (VQAWDHWIAFVLLAFIGGKML), 112 to 132 (FVLAIATSIDALAVGITLPML), 136 to 156 (FAISVVTIGVVTALLSAAGLF), and 171 to 191 (LAGGVVLIGLGFKILLEHLVL).

The protein belongs to the MntP (TC 9.B.29) family.

The protein localises to the cell inner membrane. Functionally, probably functions as a manganese efflux pump. The chain is Putative manganese efflux pump MntP from Sorangium cellulosum (strain So ce56) (Polyangium cellulosum (strain So ce56)).